The primary structure comprises 211 residues: Peptide methionine sulfoxide reductase MsrA (211 aa).

The active site involves Cys52.

Belongs to the MsrA Met sulfoxide reductase family.

The catalysed reaction is L-methionyl-[protein] + [thioredoxin]-disulfide + H2O = L-methionyl-(S)-S-oxide-[protein] + [thioredoxin]-dithiol. The enzyme catalyses [thioredoxin]-disulfide + L-methionine + H2O = L-methionine (S)-S-oxide + [thioredoxin]-dithiol. In terms of biological role, has an important function as a repair enzyme for proteins that have been inactivated by oxidation. Catalyzes the reversible oxidation-reduction of methionine sulfoxide in proteins to methionine. The sequence is that of Peptide methionine sulfoxide reductase MsrA from Photobacterium profundum (strain SS9).